The primary structure comprises 194 residues: PRELI domain containing protein 3B (194 aa).

Residues 1–172 (MKIWTSEHVF…VIHKLNAEIE (172 aa)) form the PRELI/MSF1 domain. Phosphoserine is present on residues S46 and S51.

The protein belongs to the slowmo family.

The polypeptide is PRELI domain containing protein 3B (PRELID3B) (Sus scrofa (Pig)).